Reading from the N-terminus, the 816-residue chain is tRNA(Met) cytidine acetyltransferase TmcA (816 aa).

Glutamine 265 and arginine 439 together coordinate ATP. One can recognise an N-acetyltransferase domain in the interval 469–664 (ELIRKMEVYL…YTAIVIKPIS (196 aa)). Acetyl-CoA-binding positions include 589-591 (IAT), glutamate 629, and arginine 636.

It belongs to the TmcA family.

The protein resides in the cytoplasm. The enzyme catalyses cytidine(34) in elongator tRNA(Met) + acetyl-CoA + ATP + H2O = N(4)-acetylcytidine(34) in elongator tRNA(Met) + ADP + phosphate + CoA + H(+). It carries out the reaction a cytidine in RNA + acetyl-CoA + ATP + H2O = an N(4)-acetylcytidine in RNA + ADP + phosphate + CoA + H(+). The catalysed reaction is a cytidine in tRNA + acetyl-CoA + ATP + H2O = an N(4)-acetylcytidine in tRNA + ADP + phosphate + CoA + H(+). It catalyses the reaction a cytidine in mRNA + acetyl-CoA + ATP + H2O = an N(4)-acetylcytidine in mRNA + ADP + phosphate + CoA + H(+). Catalyzes the formation of N(4)-acetylcytidine (ac(4)C) at the wobble position of tRNA(Met), by using acetyl-CoA as an acetyl donor and ATP (or GTP). In terms of biological role, catalyzes the formation of 233 N(4)-acetylcytidine (ac(4)C) sites in RNA, on the middle C of a CCG motif. Modifications are found in rRNA, ncRNA, mRNA and tRNA. More acetylation is observed at 85 than at 65 or 75 degrees Celsius. The sequence is that of tRNA(Met) cytidine acetyltransferase TmcA from Pyrococcus furiosus (strain ATCC 43587 / DSM 3638 / JCM 8422 / Vc1).